The primary structure comprises 598 residues: MNELIKHKLELLPDSPGCYLHKDKEGTIIYVGKAKNLKKRVRSYFRGSHDTKTELLVSEIVDFEYIVTESDTEALLLEINLIQKNMPKYNIKLKDDKSYPFLKITNESFPRLVITRYIKKNDGLYFGPYPDSYTANEVKKLLDRIFPFKKCKNPINKVCFYYHLGQCCAHTICHTDKAYWDRLIDDVKHFLNGKDDKIIEDLRSKMLAASEEMAFERAAEYRDLISGIATMRTKQRVMSKDLQDRDIFGYYVDKGWMCVQVFFVRQGKLIQRDVNLFPYYNDAEEDFLTYMGQFYQDKQHFIPKEVFIPEAIDEELVAAIVPTKIIKPKRGEKKQLVALATKNARVSLQQKFDLLEKDIKKTSGAIDNLGHLLGINKPVRIEAFDNSNIQGTSPVAAMVVFVDGKPSKKDYRKFKVKTVVGPDDYASMREVLFRRYSRVKKEGLQAPNLIIVDGGVGQVNVAKDVIEKQLGLTIPVAGLQKNDKHQTHDLLFGNPLEVVPLPRRSEEFFLLHRIQDEVHRFAVTFHRQVRRKNSFSSTLDHISGLGPKRKQLLLRHFKTITAIASATSEEIQALGIPKTVVEAIQQQITDNKNDRSSP.

The GIY-YIG domain maps to 14 to 91 (DSPGCYLHKD…IQKNMPKYNI (78 aa)). One can recognise a UVR domain in the interval 196–231 (DKIIEDLRSKMLAASEEMAFERAAEYRDLISGIATM).

The protein belongs to the UvrC family. As to quaternary structure, interacts with UvrB in an incision complex.

Its subcellular location is the cytoplasm. Its function is as follows. The UvrABC repair system catalyzes the recognition and processing of DNA lesions. UvrC both incises the 5' and 3' sides of the lesion. The N-terminal half is responsible for the 3' incision and the C-terminal half is responsible for the 5' incision. This Streptococcus pyogenes serotype M18 (strain MGAS8232) protein is UvrABC system protein C.